The chain runs to 421 residues: Serine hydroxymethyltransferase (421 aa).

Residues L121 and 125-127 (GHL) each bind (6S)-5,6,7,8-tetrahydrofolate. At K230 the chain carries N6-(pyridoxal phosphate)lysine. 355 to 357 (SPF) provides a ligand contact to (6S)-5,6,7,8-tetrahydrofolate.

This sequence belongs to the SHMT family. Homodimer. Pyridoxal 5'-phosphate is required as a cofactor.

The protein resides in the cytoplasm. The enzyme catalyses (6R)-5,10-methylene-5,6,7,8-tetrahydrofolate + glycine + H2O = (6S)-5,6,7,8-tetrahydrofolate + L-serine. It functions in the pathway one-carbon metabolism; tetrahydrofolate interconversion. It participates in amino-acid biosynthesis; glycine biosynthesis; glycine from L-serine: step 1/1. In terms of biological role, catalyzes the reversible interconversion of serine and glycine with tetrahydrofolate (THF) serving as the one-carbon carrier. This reaction serves as the major source of one-carbon groups required for the biosynthesis of purines, thymidylate, methionine, and other important biomolecules. Also exhibits THF-independent aldolase activity toward beta-hydroxyamino acids, producing glycine and aldehydes, via a retro-aldol mechanism. This chain is Serine hydroxymethyltransferase, found in Cellvibrio japonicus (strain Ueda107) (Pseudomonas fluorescens subsp. cellulosa).